Here is a 24-residue protein sequence, read N- to C-terminus: VRDAYIAQNYNCVYTCFKNDYCND.

Residues 2–24 enclose the LCN-type CS-alpha/beta domain; sequence RDAYIAQNYNCVYTCFKNDYCND.

This sequence belongs to the long (4 C-C) scorpion toxin superfamily. Sodium channel inhibitor family. Alpha subfamily. Expressed by the venom gland.

The protein resides in the secreted. Its function is as follows. Binds to sodium channels (Nav) and inhibits the inactivation of the activated channels, thereby blocking neuronal transmission. This Buthus occitanus tunetanus (Common European scorpion) protein is Neurotoxin 5.